A 191-amino-acid chain; its full sequence is Glycerol-3-phosphate acyltransferase (191 aa).

A run of 5 helical transmembrane segments spans residues 3-23, 51-71, 78-98, 108-128, and 150-170; these read YLIV…FILT, TLGY…VLYV, YIFI…WLKF, VGIL…SWAV, and YLIV…VLIF.

The protein belongs to the PlsY family. In terms of assembly, probably interacts with PlsX.

The protein resides in the cell inner membrane. It carries out the reaction an acyl phosphate + sn-glycerol 3-phosphate = a 1-acyl-sn-glycero-3-phosphate + phosphate. It functions in the pathway lipid metabolism; phospholipid metabolism. Its function is as follows. Catalyzes the transfer of an acyl group from acyl-phosphate (acyl-PO(4)) to glycerol-3-phosphate (G3P) to form lysophosphatidic acid (LPA). This enzyme utilizes acyl-phosphate as fatty acyl donor, but not acyl-CoA or acyl-ACP. In Pelagibacter ubique (strain HTCC1062), this protein is Glycerol-3-phosphate acyltransferase.